The chain runs to 980 residues: Chitin binding domain containing chtb-2 (980 aa).

The first 20 residues, 1 to 20 (MRTMHCFLFILLFCLGQVFT), serve as a signal peptide directing secretion. Asn-187 and Asn-190 each carry an N-linked (GlcNAc...) asparagine glycan. Disordered stretches follow at residues 310 to 354 (ERQQ…AELD), 431 to 451 (QEEERQRKIQQQKVEMEQIRQ), and 486 to 512 (EILRQQEEDQKKKKLEKDREQREQQEA). Asn-941 and Asn-975 each carry an N-linked (GlcNAc...) asparagine glycan.

The polypeptide is Chitin binding domain containing chtb-2 (Caenorhabditis elegans).